A 68-amino-acid chain; its full sequence is Alpha-conotoxin-like Mr1.2 (68 aa).

The N-terminal stretch at 1 to 21 is a signal peptide; that stretch reads MGMRMMFTVFLLVVLATTVVS. A propeptide spanning residues 22-48 is cleaved from the precursor; it reads FTSDRGSDGRNAAAKDKASDLVALTVK. 2 disulfide bridges follow: C50/C56 and C51/C64. Positions 52 to 54 are ser-Xaa-Pro motif, crucial for potent interaction with nAChR; that stretch reads SNP. The residue at position 65 (N65) is an Asparagine amide.

This sequence belongs to the conotoxin A superfamily. Expressed by the venom duct.

It is found in the secreted. Alpha-conotoxins act on postsynaptic membranes, they bind to the nicotinic acetylcholine receptors (nAChR) and thus inhibit them. This is Alpha-conotoxin-like Mr1.2 from Conus marmoreus (Marble cone).